Consider the following 981-residue polypeptide: GPI ethanolamine phosphate transferase 1 (981 aa).

Over 1–6 the chain is Cytoplasmic; sequence MAGSSR. The helical transmembrane segment at 7 to 27 threads the bilayer; sequence IGFMAIAVAFHLVYILSIFDI. The Lumenal portion of the chain corresponds to 28 to 464; the sequence is YFVSPIVTGM…LQTYDWLFLR (437 aa). N148, N211, and N295 each carry an N-linked (GlcNAc...) asparagine glycan. The helical transmembrane segment at 465–485 threads the bilayer; it reads ALITIGYLGWMAYATTTVLSL. Residues 486-496 lie on the Cytoplasmic side of the membrane; that stretch reads YVVKESMSPQR. The chain crosses the membrane as a helical span at residues 497 to 517; sequence TLLGSAFFLSLLVALYSSFII. Over 518–519 the chain is Lumenal; sequence SK. Residues 520-540 traverse the membrane as a helical segment; sequence SPPAYYLYAFFPVLFWEEVYA. At 541–560 the chain is on the cytoplasmic side; the sequence is RRANVAKGFQALFGHVKSGG. The helical transmembrane segment at 561 to 581 threads the bilayer; it reads AVVALVFNVVLYLGVIQSLAL. At 582–587 the chain is on the lumenal side; that stretch reads AYIHRE. The chain crosses the membrane as a helical span at residues 588–608; it reads ILTGLFVLGAFWPMTQGISFL. Residues 609 to 611 lie on the Cytoplasmic side of the membrane; the sequence is RSH. A helical membrane pass occupies residues 612 to 632; the sequence is LFLSMLWFFSCLAMSTFTLLP. Residues 633–638 lie on the Lumenal side of the membrane; sequence AMKVED. The helical transmembrane segment at 639–659 threads the bilayer; it reads IPLIMAGGGLMTFVGLAYLVL. The Cytoplasmic segment spans residues 660-681; it reads EDFILSDVSSSKTKLKRLHTSR. Residues 682–702 form a helical membrane-spanning segment; that stretch reads TLLGIQVGLIILAMLVTHSSA. Residues 703–708 lie on the Lumenal side of the membrane; that stretch reads TSLQAK. The chain crosses the membrane as a helical span at residues 709–729; sequence LGLPKGNQIVGWFVLVTSLLM. The Cytoplasmic segment spans residues 730-744; that stretch reads PLAYRLQPNSHYMHR. Residues 745–767 traverse the membrane as a helical segment; sequence LAIIFLTCAPTFVILTISYEGLF. Residues 768 to 819 lie on the Lumenal side of the membrane; sequence YVAFSITLLSWVRLEYAVDAFTQEKAKKQATVAGSQQHTPSTFRPLSLSDAR. Residues 820 to 840 form a helical membrane-spanning segment; that stretch reads IALFFMVLLQSAFFSTGNIAS. Topologically, residues 841–862 are cytoplasmic; it reads ISSFSLESVSRLIPVFDPFSQG. A helical transmembrane segment spans residues 863-883; that stretch reads ALLILKIIIPFFLISANLGVL. The Lumenal portion of the chain corresponds to 884–892; the sequence is NKRLGVAPS. A helical transmembrane segment spans residues 893–913; it reads AIFMVVLTASDVLTLYFFWVV. Residues 914-929 lie on the Cytoplasmic side of the membrane; the sequence is KDEGSWLEIGSTITHF. A helical transmembrane segment spans residues 930-950; sequence AIASFLCVFVAALEFVSAAFI. Residues 951–981 lie on the Lumenal side of the membrane; that stretch reads AGIEVEDTKSAALTSASTKADEKVPPVAGAE.

Belongs to the PIGG/PIGN/PIGO family. PIGN subfamily.

The protein localises to the endoplasmic reticulum membrane. It functions in the pathway glycolipid biosynthesis; glycosylphosphatidylinositol-anchor biosynthesis. Ethanolamine phosphate transferase involved in glycosylphosphatidylinositol-anchor biosynthesis. Transfers ethanolamine phosphate to the first alpha-1,4-linked mannose of the glycosylphosphatidylinositol precursor of GPI-anchor. This Gibberella zeae (strain ATCC MYA-4620 / CBS 123657 / FGSC 9075 / NRRL 31084 / PH-1) (Wheat head blight fungus) protein is GPI ethanolamine phosphate transferase 1 (MCD4).